We begin with the raw amino-acid sequence, 126 residues long: Fumarate reductase subunit C (126 aa).

3 helical membrane-spanning segments follow: residues 30-50 (IFVA…GAGG), 64-84 (VVVV…VTWF), and 105-125 (VLAG…WMVL).

This sequence belongs to the FrdC family. Part of an enzyme complex containing four subunits: a flavoprotein (FrdA), an iron-sulfur protein (FrdB), and two hydrophobic anchor proteins (FrdC and FrdD).

It is found in the cell membrane. Functionally, anchors the catalytic components of the fumarate reductase complex to the cell membrane, binds quinones. This Mycobacterium tuberculosis (strain CDC 1551 / Oshkosh) protein is Fumarate reductase subunit C.